The sequence spans 481 residues: PRAME family member 22 (481 aa).

The stretch at 99-126 (RWKLQVLELRDVDENFWTIWSGARPLSC) is one LRR 1; degenerate repeat. An LRR 2; degenerate repeat occupies 181–205 (HLCCTKVVNYSMSILNFRNILETVY). Residues 206–232 (PDSIQVLEIWNMCWPCMIVEFSRYLSQ) form an LRR 3; degenerate repeat. An LRR 4; degenerate repeat occupies 233–267 (MRNLRKLFISDGCRYLLSSDSQEQLVAEFSSVLLR). LRR repeat units follow at residues 268-293 (LEYLQMLYVRRVCFFRGHLDQLIRCL), 294-325 (RSPLETLALTYGFLEKVDLKCLPRYPSLSQLK), 326-344 (QLNLSHGALRFIRLEPLRA), 350-377 (AATLQTLFLVDCGIRDSKLRVILPALSC), and 378-402 (CSNLTTFCFHGNDTSMDGLKDLLRH).

Belongs to the PRAME family.

The protein is PRAME family member 22 of Homo sapiens (Human).